The chain runs to 342 residues: Delta(6)-protoilludene synthase (342 aa).

Positions 81, 217, 221, and 225 each coordinate Mg(2+). Residues 81-85 (DEYSD) carry the DDXXD motif motif. Residues Arg306 and Tyr307 each coordinate (2E,6E)-farnesyl diphosphate.

This sequence belongs to the terpene synthase family. Mg(2+) is required as a cofactor.

The enzyme catalyses (2E,6E)-farnesyl diphosphate = Delta(6)-protoilludene + diphosphate. Its function is as follows. Delta(6)-protoilludene synthase, part of the gene cluster that mediates the biosynthesis of melleolides, a range of antifungal and phytotoxic polyketide derivatives composed of an orsellinic acid (OA) moiety esterified to various sesquiterpene alcohols. The first step in melleolides biosynthesis is performed by the delta(6)-protoilludene synthase PRO1 which catalyzes the cyclization of farnesyl diphosphate to protoilludene. The orsellinic acid synthase armB produces OA by condensing acetyl-CoA with 3 malonyl-CoA units in a three-round chain elongation reaction folowed by a C2-C7 ring closure. ArmB further catalyzes the trans-esterification of OA to the various sesquiterpene alcohols resulting from the hydroxylation of protoilludene. The melleolides cluster also includes 5 cytochrome P450 monooxygenases, 4 NAD(+)-dependent oxidoreductases, one flavin-dependent oxidoreductase, and one O-methyltransferase. The cytochrome P450 monooxygenases may be involved in protoilludene hydroxylation to elaborate melleolides with multiple alcohol groups, such as melleolide D, which carries alcohol functionalities at C-4, C-5, C-10, and C-13. The role of the NAD(+)-dependent enzymes remains unknown. Numerous melleolides, including arnamial, show 5'-O-methylation of the aromatic moiety which may be catalyzed by the methyltransferase encoded in the cluster. The flavin-dependent oxidoreductase might represent the dehydrogenase yielding the aldehyde in position 1 of arnamial and other melleolides. Finally, several halogenases, localized outside of the cluster, are able to catalyze the transfer of a single chlorine atom to the melleolide backbone, resulting in a 6'-chloromelleolide product. In Armillaria ostoyae (Armillaria root rot fungus), this protein is Delta(6)-protoilludene synthase.